The following is a 105-amino-acid chain: Small ribosomal subunit protein uS10 (105 aa).

Belongs to the universal ribosomal protein uS10 family. In terms of assembly, part of the 30S ribosomal subunit.

Involved in the binding of tRNA to the ribosomes. In Rickettsia rickettsii (strain Iowa), this protein is Small ribosomal subunit protein uS10.